Reading from the N-terminus, the 282-residue chain is Kanosamine-6-phosphate phosphatase (282 aa).

Catalysis depends on D25, which acts as the Nucleophile. Mg(2+) contacts are provided by D25 and D27. K209 contacts phosphate. Positions 232 and 233 each coordinate Mg(2+). N235 provides a ligand contact to phosphate.

The protein belongs to the HAD-like hydrolase superfamily. Cof family. Homotetramer. Requires Mg(2+) as cofactor.

The enzyme catalyses D-kanosamine 6-phosphate + H2O = kanosamine + phosphate. It functions in the pathway antibiotic biosynthesis; kanosamine biosynthesis. Its function is as follows. Involved in the biosynthesis of kanosamine (3-amino-3-deoxy-D-glucose), which is known to have antibiotic and antifungal properties, and to be a precursor of the antibiotic neotrehalosadiamine (3,3'-diamino-3,3'-dideoxy-alpha,beta-trehalose (NTD)). Catalyzes the dephosphorylation of kanosamine 6-phosphate to yield kanosamine. There is a trace amount of activity using glucosamine-6-phosphate. The chain is Kanosamine-6-phosphate phosphatase (ntdB) from Bacillus subtilis (strain 168).